The primary structure comprises 545 residues: CTP synthase (545 aa).

The amidoligase domain stretch occupies residues 1-266; it reads MTTRYIFVTG…DELVTKRFGI (266 aa). Ser14 contributes to the CTP binding site. Ser14 provides a ligand contact to UTP. ATP is bound by residues 15–20 and Asp72; that span reads SLGKGI. Residues Asp72 and Glu140 each contribute to the Mg(2+) site. Residues 147–149, 187–192, and Lys223 contribute to the CTP site; these read DIE and KTKPTQ. UTP is bound by residues 187 to 192 and Lys223; that span reads KTKPTQ. 239–241 contributes to the ATP binding site; that stretch reads KDV. Positions 291–542 constitute a Glutamine amidotransferase type-1 domain; sequence TIGMVGKYIE…VAAAAAHQKR (252 aa). Gly352 contributes to the L-glutamine binding site. Residue Cys379 is the Nucleophile; for glutamine hydrolysis of the active site. L-glutamine is bound by residues 380–383, Glu403, and Arg470; that span reads LGMQ. Catalysis depends on residues His515 and Glu517.

This sequence belongs to the CTP synthase family. In terms of assembly, homotetramer.

It carries out the reaction UTP + L-glutamine + ATP + H2O = CTP + L-glutamate + ADP + phosphate + 2 H(+). It catalyses the reaction L-glutamine + H2O = L-glutamate + NH4(+). The catalysed reaction is UTP + NH4(+) + ATP = CTP + ADP + phosphate + 2 H(+). Its pathway is pyrimidine metabolism; CTP biosynthesis via de novo pathway; CTP from UDP: step 2/2. With respect to regulation, allosterically activated by GTP, when glutamine is the substrate; GTP has no effect on the reaction when ammonia is the substrate. The allosteric effector GTP functions by stabilizing the protein conformation that binds the tetrahedral intermediate(s) formed during glutamine hydrolysis. Inhibited by the product CTP, via allosteric rather than competitive inhibition. Catalyzes the ATP-dependent amination of UTP to CTP with either L-glutamine or ammonia as the source of nitrogen. Regulates intracellular CTP levels through interactions with the four ribonucleotide triphosphates. This is CTP synthase from Shewanella woodyi (strain ATCC 51908 / MS32).